Consider the following 369-residue polypeptide: Short chain dehydrogenase rstn4 (369 aa).

Lys88, Asp111, Asn138, Tyr234, and Lys238 together coordinate NADP(+). Tyr234 functions as the Proton donor in the catalytic mechanism. Residue Lys238 is the Lowers pKa of active site Tyr of the active site.

This sequence belongs to the short-chain dehydrogenases/reductases (SDR) family.

It participates in antifungal biosynthesis. Its function is as follows. Short chain dehydrogenase; part of the gene cluster that mediates the biosynthesis of the tetrahydropyranyl antifungal agent restricticin that acts as an inhibitor of CYP51 and blocks the ergosterol biosynthesis. The highly reducing polyketide synthase rstn3, the short chain dehydrogenase rstn4, the cyclase rstn5, the FAD-dependent monooxygenase rstn6 and the enoylreductase rstn7 are required to generate the first stable intermediate desmethylrestrictinol. Rstn3 with rstn7 biosynthesize the first polyketide chain intermediate that is reduced by rstn4, followed by epoxidation by rstn6 before 6-endo cyclization via epoxide opening by rstn5 leads to desmethylrestrictinol. The methyltransferase rstn1 then catalyzes the C4 O-methylation of desmethylrestrictinol to produce restrictinol, and the nonribosomal peptide synthetase rstn8 catalyzes the C3 esterification of restrictinol with glycine that leads to restricticin. The chain is Short chain dehydrogenase rstn4 from Aspergillus nomiae NRRL (strain ATCC 15546 / NRRL 13137 / CBS 260.88 / M93).